The chain runs to 421 residues: Zinc chaperone AztD (421 aa).

Positions 1–29 (MMENIMKKRLLSTSISTLLLGLSVMPAFA) are cleaved as a signal peptide. Zn(2+)-binding residues include H101, H104, D106, H126, H169, H216, and H405. A disulfide bridge links C212 with C229. The segment at 399-421 (GGSGKVHGEHHDHEAHHHDDHAH) is disordered. The span at 404-421 (VHGEHHDHEAHHHDDHAH) shows a compositional bias: basic and acidic residues. The N-terminal Zn(2+)-binding motif; binds a third Zn(2+) with low affinity signature appears at 408 to 419 (HHDHEAHHHDDH).

As to quaternary structure, monomer.

It localises to the periplasm. Acts as a zinc chaperone in the AztABCD zinc transport system. Directly transfers one zinc cation to the solute binding protein AztC; the transfer occurs without the formation of a stable interaction. Binds 3 Zn(2+), two with high affinity and one with low affinity, and transfers only Zn(2+) bound to site 2 to AztC. The protein is Zinc chaperone AztD of Citrobacter koseri (strain ATCC BAA-895 / CDC 4225-83 / SGSC4696).